A 302-amino-acid chain; its full sequence is Proteasome subunit beta (302 aa).

Residues 1-10 (MAGRVREVSH) show a composition bias toward basic and acidic residues. A disordered region spans residues 1–21 (MAGRVREVSHSSDQSGRLPAA). A propeptide spans 1 to 67 (MAGRVREVSH…GPGAGEPPHA (67 aa)) (removed in mature form; by autocatalysis). The Nucleophile role is filled by Thr-68. Residues 283 to 302 (RRGNPGGNPGISAVHGDGGN) form a disordered region.

Belongs to the peptidase T1B family. The 20S proteasome core is composed of 14 alpha and 14 beta subunits that assemble into four stacked heptameric rings, resulting in a barrel-shaped structure. The two inner rings, each composed of seven catalytic beta subunits, are sandwiched by two outer rings, each composed of seven alpha subunits. The catalytic chamber with the active sites is on the inside of the barrel. Has a gated structure, the ends of the cylinder being occluded by the N-termini of the alpha-subunits. Is capped by the proteasome-associated ATPase, ARC.

It is found in the cytoplasm. The catalysed reaction is Cleavage of peptide bonds with very broad specificity.. It participates in protein degradation; proteasomal Pup-dependent pathway. With respect to regulation, the formation of the proteasomal ATPase ARC-20S proteasome complex, likely via the docking of the C-termini of ARC into the intersubunit pockets in the alpha-rings, may trigger opening of the gate for substrate entry. Interconversion between the open-gate and close-gate conformations leads to a dynamic regulation of the 20S proteasome proteolysis activity. Component of the proteasome core, a large protease complex with broad specificity involved in protein degradation. This Kineococcus radiotolerans (strain ATCC BAA-149 / DSM 14245 / SRS30216) protein is Proteasome subunit beta.